The chain runs to 151 residues: 3-hydroxyacyl-[acyl-carrier-protein] dehydratase FabZ (151 aa).

H54 is a catalytic residue.

The protein belongs to the thioester dehydratase family. FabZ subfamily.

Its subcellular location is the cytoplasm. The enzyme catalyses a (3R)-hydroxyacyl-[ACP] = a (2E)-enoyl-[ACP] + H2O. Its function is as follows. Involved in unsaturated fatty acids biosynthesis. Catalyzes the dehydration of short chain beta-hydroxyacyl-ACPs and long chain saturated and unsaturated beta-hydroxyacyl-ACPs. The polypeptide is 3-hydroxyacyl-[acyl-carrier-protein] dehydratase FabZ (Sodalis glossinidius (strain morsitans)).